The following is a 319-amino-acid chain: Acetyl esterase (319 aa).

The short motif at 91–93 (HGG) is the Involved in the stabilization of the negatively charged intermediate by the formation of the oxyanion hole element. Catalysis depends on residues serine 165, aspartate 262, and histidine 292.

The protein belongs to the 'GDXG' lipolytic enzyme family. Homodimer. Interacts with MalT and MelA.

The protein localises to the cytoplasm. Functionally, displays esterase activity towards short chain fatty esters (acyl chain length of up to 8 carbons). Able to hydrolyze triacetylglycerol (triacetin) and tributyrylglycerol (tributyrin), but not trioleylglycerol (triolein) or cholesterol oleate. Negatively regulates MalT activity by antagonizing maltotriose binding. Inhibits MelA galactosidase activity. The polypeptide is Acetyl esterase (Escherichia coli O45:K1 (strain S88 / ExPEC)).